Reading from the N-terminus, the 104-residue chain is Large ribosomal subunit protein uL24 (104 aa).

The protein belongs to the universal ribosomal protein uL24 family. In terms of assembly, part of the 50S ribosomal subunit.

Functionally, one of two assembly initiator proteins, it binds directly to the 5'-end of the 23S rRNA, where it nucleates assembly of the 50S subunit. In terms of biological role, one of the proteins that surrounds the polypeptide exit tunnel on the outside of the subunit. The sequence is that of Large ribosomal subunit protein uL24 from Escherichia coli O81 (strain ED1a).